A 443-amino-acid polypeptide reads, in one-letter code: ATP-dependent protease ATPase subunit HslU (443 aa).

Residues I18, 60–65 (GVGKTE), D256, E321, and R393 each bind ATP.

It belongs to the ClpX chaperone family. HslU subfamily. In terms of assembly, a double ring-shaped homohexamer of HslV is capped on each side by a ring-shaped HslU homohexamer. The assembly of the HslU/HslV complex is dependent on binding of ATP.

The protein resides in the cytoplasm. ATPase subunit of a proteasome-like degradation complex; this subunit has chaperone activity. The binding of ATP and its subsequent hydrolysis by HslU are essential for unfolding of protein substrates subsequently hydrolyzed by HslV. HslU recognizes the N-terminal part of its protein substrates and unfolds these before they are guided to HslV for hydrolysis. The polypeptide is ATP-dependent protease ATPase subunit HslU (Vibrio parahaemolyticus serotype O3:K6 (strain RIMD 2210633)).